Consider the following 555-residue polypeptide: uncharacterized protein (555 aa).

The N-terminal stretch at 1–28 (MRSGLFGVLRWTAVGLVATLVASLALTA) is a signal peptide. Residue cysteine 29 is the site of N-palmitoyl cysteine attachment. Cysteine 29 is lipidated: S-diacylglycerol cysteine.

This sequence to M.tuberculosis Rv2585c and M.bovis Mb2616c.

Its subcellular location is the cell membrane. This is an uncharacterized protein from Mycobacterium leprae (strain TN).